Here is a 556-residue protein sequence, read N- to C-terminus: Formate--tetrahydrofolate ligase 1 (556 aa).

65 to 72 (TPAGEGKS) is an ATP binding site.

It belongs to the formate--tetrahydrofolate ligase family.

It carries out the reaction (6S)-5,6,7,8-tetrahydrofolate + formate + ATP = (6R)-10-formyltetrahydrofolate + ADP + phosphate. It participates in one-carbon metabolism; tetrahydrofolate interconversion. The sequence is that of Formate--tetrahydrofolate ligase 1 from Streptococcus pyogenes serotype M28 (strain MGAS6180).